The sequence spans 536 residues: Probable protein S-acyltransferase 23 (536 aa).

Residues 1–23 (MDSSEIEVVPLDSNSHQSPTESP) are disordered. A compositionally biased stretch (polar residues) spans 12 to 23 (DSNSHQSPTESP). ANK repeat units lie at residues 57–86 (NGFY…DVNS), 90–119 (IQQT…RIEA), 123–153 (NGFR…DYNA), 157–186 (EGRS…CQNR), 190–219 (TGCT…KEEL), and 225–254 (TGST…TRKN). 2 consecutive transmembrane segments (helical) span residues 270 to 290 (YAPM…TSIV) and 298 to 318 (ITAM…YALI). In terms of domain architecture, DHHC spans 363-413 (QLCPTCKIIRPVRSKHCPTCKRCVEQFDHHCPWISNCVGKKNKRYFLVFVI). Catalysis depends on Cys-393, which acts as the S-palmitoyl cysteine intermediate. Helical transmembrane passes span 407-427 (YFLV…TTAV) and 454-474 (AAVF…LTIS).

This sequence belongs to the DHHC palmitoyltransferase family. As to expression, expressed in roots, shoots, flowers and pollen.

The protein resides in the golgi apparatus membrane. The enzyme catalyses L-cysteinyl-[protein] + hexadecanoyl-CoA = S-hexadecanoyl-L-cysteinyl-[protein] + CoA. Its function is as follows. Palmitoyl acyltransferase. The chain is Probable protein S-acyltransferase 23 (PAT23) from Arabidopsis thaliana (Mouse-ear cress).